The chain runs to 245 residues: MIIPAIDLIDGNVVRLYQGDYGQQTTFDLSPLAQLQSYEAQGAKWLHIVDLTGAKDPAKRQTLLISQLVAGLNANIQVGGGIRTEEQVTELLNIGVKRVVIGSLAVKEPELVKQWFIKYGSEAICLALDVNINQSGEKIVAVSGWQSGGGKSLESLVETFSAVGLKHALVTDISRDGTLTGANTALYQEIAASYPDIAWQASGGIATLADVAAVRDSGAAGIIIGKALLINQFNVVEAIQCWPND.

The active-site Proton acceptor is D7. The active-site Proton donor is the D129.

It belongs to the HisA/HisF family.

It is found in the cytoplasm. It carries out the reaction 1-(5-phospho-beta-D-ribosyl)-5-[(5-phospho-beta-D-ribosylamino)methylideneamino]imidazole-4-carboxamide = 5-[(5-phospho-1-deoxy-D-ribulos-1-ylimino)methylamino]-1-(5-phospho-beta-D-ribosyl)imidazole-4-carboxamide. It participates in amino-acid biosynthesis; L-histidine biosynthesis; L-histidine from 5-phospho-alpha-D-ribose 1-diphosphate: step 4/9. The chain is 1-(5-phosphoribosyl)-5-[(5-phosphoribosylamino)methylideneamino] imidazole-4-carboxamide isomerase from Shewanella baltica (strain OS223).